Here is a 564-residue protein sequence, read N- to C-terminus: MNKIIIRKLFIFDVIEKKAKSVDFEDGINIVTSKGNQLGKSTIMKSIYYTLGAEVFFADRLNVKSKIHMLETDVNDKKYTFIRHGDVVVIKDGKGIFKTSNASELSSKLHDIFGFSVFLEDKQKKYVIAPPVFRYIPYYIDQDHGWTSELKSFDKLGQFDKKSRDLLFYYHLNILDEDYGVKLKEKKELDASMTDLKTRKKEILGLLAYIRENITAFNLEMDITALQIQKREILNKYKKYSYDLNNIRRKILEYQEEIFKIDNVIDNLNSTLKQNDKVREHIKHQFDVECPYCNNHFEIQAKDILRINYNIVDLEASKLEMLDIKEKLLGKMKKVQKEYEDYQATLKAIEEEKVDSENTLEDILKFKGLQETQNQLNTELVKNTGDIEEKSEDLKEIRRDLKKWQDEIDKVNSRYKDILNLNLIRFNTNEHALPEKYNIGKNLKASGSGQVRVNLARVYSFIKLLEEYNPTGLKYPLVIDSPKGGEQSTTNSELILRLLTEKAQISNQIILATIDFESFYNGDTKKFNIISLENEPYHLLSAEDYQNNQVIIDDFVSLYFEANQ.

Functionally, component of antiviral defense system Lamassu type II, composed of LmuA and LmuB. Expression of Lamassu type II in B.subtilis (strain BEST7003) confers resistance to phage SpBeta. May be an ATPase. The sequence is that of Lamassu protein LmuB from Bacillus cereus (strain VD014).